The primary structure comprises 66 residues: Small ribosomal subunit protein bS21 (66 aa).

It belongs to the bacterial ribosomal protein bS21 family.

The sequence is that of Small ribosomal subunit protein bS21 from Maridesulfovibrio salexigens (strain ATCC 14822 / DSM 2638 / NCIMB 8403 / VKM B-1763) (Desulfovibrio salexigens).